Reading from the N-terminus, the 211-residue chain is Thymidylate kinase (211 aa).

10–17 (GGDGVGKS) is a binding site for ATP.

The protein belongs to the thymidylate kinase family.

It carries out the reaction dTMP + ATP = dTDP + ADP. Phosphorylation of dTMP to form dTDP in both de novo and salvage pathways of dTTP synthesis. In Clavibacter michiganensis subsp. michiganensis (strain NCPPB 382), this protein is Thymidylate kinase.